We begin with the raw amino-acid sequence, 208 residues long: Large ribosomal subunit protein uL4 (208 aa).

The disordered stretch occupies residues 49–78; sequence HKAKTRAEVRGGGKKPFRQKGTGNARQGST. Positions 69 to 78 are enriched in polar residues; the sequence is GTGNARQGST.

The protein belongs to the universal ribosomal protein uL4 family. As to quaternary structure, part of the 50S ribosomal subunit.

One of the primary rRNA binding proteins, this protein initially binds near the 5'-end of the 23S rRNA. It is important during the early stages of 50S assembly. It makes multiple contacts with different domains of the 23S rRNA in the assembled 50S subunit and ribosome. Functionally, forms part of the polypeptide exit tunnel. The polypeptide is Large ribosomal subunit protein uL4 (Chlorobaculum tepidum (strain ATCC 49652 / DSM 12025 / NBRC 103806 / TLS) (Chlorobium tepidum)).